We begin with the raw amino-acid sequence, 759 residues long: Glycerophosphodiester phosphodiesterase GDPDL3 (759 aa).

The first 27 residues, 1–27 (MRGLLRASSLLLCGVILIQLLAAQIHA), serve as a signal peptide directing secretion. Residues 28–738 (QSKKPKSPWP…TNAQAPSGQT (711 aa)) are Extracellular-facing. One can recognise a GP-PDE 1 domain in the interval 44–344 (PLVIARGGFS…DFPITASASL (301 aa)). N-linked (GlcNAc...) asparagine glycans are attached at residues N99, N186, N242, N251, N326, N353, N413, N424, N488, N528, N540, and N647. The region spanning 360–661 (FLVITKDGAS…EFPFTAARYK (302 aa)) is the GP-PDE 2 domain. Positions 702–734 (FTDADVTEPPLPPVTAKAPTSSPGTPSTNAQAP) are disordered. Over residues 719–734 (APTSSPGTPSTNAQAP) the composition is skewed to polar residues. A helical transmembrane segment spans residues 739-759 (RITLSLLLSVFAMVLASLLLL).

The protein belongs to the glycerophosphoryl diester phosphodiesterase family. As to expression, expressed in roots, shoots, rosette and cauline leaves, stems, flowers and siliques.

The protein localises to the cell membrane. The catalysed reaction is a sn-glycero-3-phosphodiester + H2O = an alcohol + sn-glycerol 3-phosphate + H(+). Its function is as follows. Involved in primary cell wall organization. Required for the accumulation of crystalline cellulose. This Arabidopsis thaliana (Mouse-ear cress) protein is Glycerophosphodiester phosphodiesterase GDPDL3.